The chain runs to 947 residues: Testis-expressed protein 11 (947 aa).

The protein belongs to the SPO22 family. As to quaternary structure, interacts with SYCP2. Interacts with PBXIP1; may prevent interaction between PBXIP1 and ESR2. Interacts with SHOC1. Interacts with REDIC1. As to expression, testis-specific.

The protein resides in the chromosome. Its function is as follows. Regulator of crossing-over during meiosis. Involved in initiation and/or maintenance of chromosome synapsis and formation of crossovers. The sequence is that of Testis-expressed protein 11 (Tex11) from Mus musculus (Mouse).